A 460-amino-acid chain; its full sequence is NADH-ubiquinone oxidoreductase chain 4 (460 aa).

Helical transmembrane passes span 20 to 42 (AKWLWTTSIAQSLVIALASLSWL), 61 to 81 (PLSTPLLVLTCWLLPLMVLAS), 94 to 113 (RTYISLLVSLQMFLILAFGA), 117 to 139 (IMFYIMFEATLLPTLIIITRWGN), 148 to 168 (TYFLFYTLAGSLPLLVALLLL), 195 to 215 (LWWAACLLAFLVKMPVYGVHL), 225 to 245 (PIAGSMILAAVLLKLGGYGMM), 258 to 278 (LAYPFIVLALWGIIMTGSICL), 285 to 304 (SLIAYSSVGHMGLVAGGILI), 308 to 330 (WGFTGAIILMIAHGLASSALFCL), 351 to 371 (MILPLMTTWWFVASLANLALP), 394 to 414 (LLLTGLGTLITASYSLYLFLM), and 436 to 456 (LLITLHLIPIILLILKPELMW).

This sequence belongs to the complex I subunit 4 family.

The protein localises to the mitochondrion membrane. The catalysed reaction is a ubiquinone + NADH + 5 H(+)(in) = a ubiquinol + NAD(+) + 4 H(+)(out). Functionally, core subunit of the mitochondrial membrane respiratory chain NADH dehydrogenase (Complex I) that is believed to belong to the minimal assembly required for catalysis. Complex I functions in the transfer of electrons from NADH to the respiratory chain. The immediate electron acceptor for the enzyme is believed to be ubiquinone. This Salmo salar (Atlantic salmon) protein is NADH-ubiquinone oxidoreductase chain 4 (MT-ND4).